A 383-amino-acid chain; its full sequence is Lipid-A-disaccharide synthase (383 aa).

The protein belongs to the LpxB family.

The catalysed reaction is a lipid X + a UDP-2-N,3-O-bis[(3R)-3-hydroxyacyl]-alpha-D-glucosamine = a lipid A disaccharide + UDP + H(+). The protein operates within bacterial outer membrane biogenesis; LPS lipid A biosynthesis. In terms of biological role, condensation of UDP-2,3-diacylglucosamine and 2,3-diacylglucosamine-1-phosphate to form lipid A disaccharide, a precursor of lipid A, a phosphorylated glycolipid that anchors the lipopolysaccharide to the outer membrane of the cell. This Aliivibrio fischeri (strain MJ11) (Vibrio fischeri) protein is Lipid-A-disaccharide synthase.